A 162-amino-acid chain; its full sequence is Cyclic pyranopterin monophosphate synthase (162 aa).

Residues 75–77 (LCH) and 113–114 (ME) each bind substrate. Asp-128 is a catalytic residue.

Belongs to the MoaC family. Homohexamer; trimer of dimers.

It carries out the reaction (8S)-3',8-cyclo-7,8-dihydroguanosine 5'-triphosphate = cyclic pyranopterin phosphate + diphosphate. Its pathway is cofactor biosynthesis; molybdopterin biosynthesis. Its function is as follows. Catalyzes the conversion of (8S)-3',8-cyclo-7,8-dihydroguanosine 5'-triphosphate to cyclic pyranopterin monophosphate (cPMP). This Burkholderia ambifaria (strain MC40-6) protein is Cyclic pyranopterin monophosphate synthase.